The primary structure comprises 274 residues: MAHYFVGDIQGCFEELQLLLNNVDFNPSKDQLWAVGDLVARGPGSLETLRYFRQLEGSGRVVLGNHDLHLLAVNAKIKRANPNDKLGPLLTAPDIGSLIDWLRMQPLYQELPEHNLVMTHAGVPPQWSLETLREEADHVAAALRSDDYLTSLICHMYTNGSNCWHDSMSELERKIYCINALTRMRFLHSDGRLDFDCKLPPSACEDPDLSPWFEHSGLLNSTHTLVFGHWAAVMGKVPSSTIHALDTGCCWGEHLTLWHLESNQKITQNKLKKS.

It belongs to the Ap4A hydrolase family.

The enzyme catalyses P(1),P(4)-bis(5'-adenosyl) tetraphosphate + H2O = 2 ADP + 2 H(+). Hydrolyzes diadenosine 5',5'''-P1,P4-tetraphosphate to yield ADP. This Shewanella sediminis (strain HAW-EB3) protein is Bis(5'-nucleosyl)-tetraphosphatase, symmetrical.